The chain runs to 358 residues: Protein ocs (358 aa).

It belongs to the lysopine/nopaline/octopine/opine/vitopine dehydrogenases family. Monomer.

The catalysed reaction is D-octopine + NAD(+) + H2O = L-arginine + pyruvate + NADH + H(+). It catalyses the reaction D-lysopine + NADP(+) + H2O = L-lysine + pyruvate + NADPH + H(+). Its function is as follows. Reductive condensation of pyruvate and arginine, lysine, histidine, or octopine to form octopine, lysopine, histopine, or octopinic acid, respectively. NADPH is the preferred cofactor, but NADH can also be used. This Agrobacterium tumefaciens (strain Ach5) protein is Protein ocs (ocs).